Consider the following 371-residue polypeptide: Outer membrane protein P2 (371 aa).

The N-terminal stretch at 1 to 20 is a signal peptide; that stretch reads MKKTLAALIVGAFAASAANA.

This sequence belongs to the Gram-negative porin family. Homotrimer.

The protein localises to the cell outer membrane. Its function is as follows. Forms pores that allow passive diffusion of small molecules across the outer membrane. This chain is Outer membrane protein P2 (ompP2), found in Haemophilus influenzae.